The following is a 155-amino-acid chain: Small ribosomal subunit protein uS7c (155 aa).

Belongs to the universal ribosomal protein uS7 family. As to quaternary structure, part of the 30S ribosomal subunit.

The protein resides in the plastid. It localises to the chloroplast. Functionally, one of the primary rRNA binding proteins, it binds directly to 16S rRNA where it nucleates assembly of the head domain of the 30S subunit. The polypeptide is Small ribosomal subunit protein uS7c (rps7) (Pinus koraiensis (Korean pine)).